The primary structure comprises 87 residues: MKPAGAFLLLISLACLFLSVDAVSQGGFQAFCSNYEKTLAPDGKSCPKTHKPVCGTDGKTYQNRCAFCQTAMERSLGKLGFKHEGKC.

The N-terminal stretch at 1-22 (MKPAGAFLLLISLACLFLSVDA) is a signal peptide. The 62-residue stretch at 26-87 (GGFQAFCSNY…KLGFKHEGKC (62 aa)) folds into the Kazal-like domain. 3 disulfide bridges follow: C32-C68, C46-C65, and C54-C87.

In terms of tissue distribution, expressed in epydiymis, in the caput.

It is found in the secreted. Its function is as follows. Inhibits trypsin. This is Serine protease inhibitor Kazal-type 12 (Spink12) from Mus musculus (Mouse).